Reading from the N-terminus, the 382-residue chain is Anhydro-N-acetylmuramic acid kinase (382 aa).

Residue 9 to 16 (GTSLDGID) coordinates ATP.

It belongs to the anhydro-N-acetylmuramic acid kinase family.

It carries out the reaction 1,6-anhydro-N-acetyl-beta-muramate + ATP + H2O = N-acetyl-D-muramate 6-phosphate + ADP + H(+). The protein operates within amino-sugar metabolism; 1,6-anhydro-N-acetylmuramate degradation. It participates in cell wall biogenesis; peptidoglycan recycling. Catalyzes the specific phosphorylation of 1,6-anhydro-N-acetylmuramic acid (anhMurNAc) with the simultaneous cleavage of the 1,6-anhydro ring, generating MurNAc-6-P. Is required for the utilization of anhMurNAc either imported from the medium or derived from its own cell wall murein, and thus plays a role in cell wall recycling. The polypeptide is Anhydro-N-acetylmuramic acid kinase (Bacillus cereus (strain G9842)).